Reading from the N-terminus, the 616-residue chain is Methylmalonyl-CoA mutase small subunit (616 aa).

This sequence belongs to the methylmalonyl-CoA mutase family. In terms of assembly, heterodimer of an alpha and a beta chain. It depends on adenosylcob(III)alamin as a cofactor.

It catalyses the reaction (R)-methylmalonyl-CoA = succinyl-CoA. Its pathway is metabolic intermediate metabolism; propanoyl-CoA degradation; succinyl-CoA from propanoyl-CoA: step 3/3. Catalyzes the isomerization of succinyl-CoA to methylmalonyl-CoA during synthesis of propionate from tricarboxylic acid-cycle intermediates. This conversion most likely represents an important source of building blocks for polyketide antibiotic biosynthesis. It is unable to catalyze the conversion of isobutyryl-CoA into N-butyryl-CoA. This is Methylmalonyl-CoA mutase small subunit (mutA) from Streptomyces virginiae (Streptomyces cinnamonensis).